The sequence spans 576 residues: Eukaryotic translation initiation factor 3 subunit D (576 aa).

The interval 103 to 176 (DSTKTRFGRG…KDYDKPQRNR (74 aa)) is disordered. The span at 110-122 (GRGGLARGRGQRG) shows a compositional bias: gly residues. Residues 165–176 (GWKDYDKPQRNR) are compositionally biased toward basic and acidic residues. The interval 304-318 (TLDMVTVNENAADAP) is RNA gate.

The protein belongs to the eIF-3 subunit D family. Component of the eukaryotic translation initiation factor 3 (eIF-3) complex.

The protein localises to the cytoplasm. Functionally, mRNA cap-binding component of the eukaryotic translation initiation factor 3 (eIF-3) complex, which is involved in protein synthesis of a specialized repertoire of mRNAs and, together with other initiation factors, stimulates binding of mRNA and methionyl-tRNAi to the 40S ribosome. The eIF-3 complex specifically targets and initiates translation of a subset of mRNAs involved in cell proliferation. In the eIF-3 complex, eif3d specifically recognizes and binds the 7-methylguanosine cap of a subset of mRNAs. This chain is Eukaryotic translation initiation factor 3 subunit D, found in Botryotinia fuckeliana (strain B05.10) (Noble rot fungus).